Here is a 184-residue protein sequence, read N- to C-terminus: Casparian strip membrane protein 1 (184 aa).

The Cytoplasmic portion of the chain corresponds to Met-1–Ser-24. The chain crosses the membrane as a helical span at residues Val-25 to Met-45. The Extracellular segment spans residues Gly-46 to Thr-72. N-linked (GlcNAc...) asparagine glycosylation occurs at Asn-49. Residues Phe-73–Ile-93 traverse the membrane as a helical segment. Topologically, residues Val-94–Arg-105 are cytoplasmic. Residues Leu-106–Ala-126 traverse the membrane as a helical segment. Residues Ala-127–Ser-159 are Extracellular-facing. The chain crosses the membrane as a helical span at residues Leu-160–Ala-180. The Cytoplasmic portion of the chain corresponds to Leu-181–Arg-184.

It belongs to the Casparian strip membrane proteins (CASP) family. In terms of assembly, homodimer and heterodimers.

Its subcellular location is the cell membrane. Regulates membrane-cell wall junctions and localized cell wall deposition. Required for establishment of the Casparian strip membrane domain (CSD) and the subsequent formation of Casparian strips, a cell wall modification of the root endodermis that determines an apoplastic barrier between the intraorganismal apoplasm and the extraorganismal apoplasm and prevents lateral diffusion. The sequence is that of Casparian strip membrane protein 1 from Panicum virgatum (Blackwell switchgrass).